A 533-amino-acid chain; its full sequence is DNA-directed RNA polymerase III subunit RPC3 (533 aa).

A disordered region spans residues 161 to 183; it reads PLVPDTDSSDPGPPPPAPNLVIN. S194 carries the phosphoserine modification. The disordered stretch occupies residues 197 to 228; it reads GKGKRRRSSDEDAAGEPKAKKPRCTDNEEPTP. Basic and acidic residues predominate over residues 211–222; sequence GEPKAKKPRCTD.

This sequence belongs to the eukaryotic RPC3/POLR3C RNA polymerase subunit family. Component of the RNA polymerase III complex consisting of 17 subunits: a ten-subunit horseshoe-shaped catalytic core composed of POLR3A/RPC1, POLR3B/RPC2, POLR1C/RPAC1, POLR1D/RPAC2, POLR3K/RPC10, POLR2E/RPABC1, POLR2F/RPABC2, POLR2H/RPABC3, POLR2K/RPABC4 and POLR2L/RPABC5; a mobile stalk composed of two subunits POLR3H/RPC8 and CRCP/RPC9, protruding from the core and functioning primarily in transcription initiation; and additional subunits homologous to general transcription factors of the RNA polymerase II machinery, POLR3C/RPC3-POLR3F/RPC6-POLR3G/RPC7 heterotrimer required for transcription initiation and POLR3D/RPC4-POLR3E/RPC5 heterodimer involved in both transcription initiation and termination. Directly interacts with POLR3G/RPC7 and POLR3GL. Directly interacts with POLR3F/RPC6. Interacts with GTF3C4. As part of the RNA polymerase III complex, interacts with PKP2.

The protein localises to the nucleus. Its function is as follows. DNA-dependent RNA polymerase catalyzes the transcription of DNA into RNA using the four ribonucleoside triphosphates as substrates. Specific peripheric component of RNA polymerase III (Pol III) which synthesizes small non-coding RNAs including 5S rRNA, snRNAs, tRNAs and miRNAs from at least 500 distinct genomic loci. Part of POLR3C/RPC3-POLR3F/RPC6-POLR3G/RPC7 heterotrimer, coordinates the dynamics of Pol III stalk and clamp modules during the transition from apo to elongation state. Pol III plays a key role in sensing and limiting infection by intracellular bacteria and DNA viruses. Acts as a nuclear and cytosolic DNA sensor involved in innate immune response. Can sense non-self dsDNA that serves as template for transcription into dsRNA. The non-self RNA polymerase III transcripts, such as Epstein-Barr virus-encoded RNAs (EBERs) induce type I interferon and NF-kappa-B through the RIG-I pathway. Preferentially binds single-stranded DNA (ssDNA) in a sequence-independent manner. The sequence is that of DNA-directed RNA polymerase III subunit RPC3 from Rattus norvegicus (Rat).